A 218-amino-acid chain; its full sequence is Small ribosomal subunit protein uS3c (218 aa).

Residues 47-118 (VQKHMRISSG…RLNIAIARVA (72 aa)) form the KH type-2 domain.

Belongs to the universal ribosomal protein uS3 family. Part of the 30S ribosomal subunit.

The protein localises to the plastid. The protein resides in the chloroplast. In Nymphaea alba (White water-lily), this protein is Small ribosomal subunit protein uS3c (rps3).